A 131-amino-acid chain; its full sequence is Small ribosomal subunit protein uS8 (131 aa).

This sequence belongs to the universal ribosomal protein uS8 family. In terms of assembly, part of the 30S ribosomal subunit. Contacts proteins S5 and S12.

In terms of biological role, one of the primary rRNA binding proteins, it binds directly to 16S rRNA central domain where it helps coordinate assembly of the platform of the 30S subunit. The sequence is that of Small ribosomal subunit protein uS8 from Polaromonas naphthalenivorans (strain CJ2).